The following is a 128-amino-acid chain: Photosystem II reaction center Psb28 protein (128 aa).

Positions 109–128 (SGLGYSQDSGEAPASDSSNG) are disordered. A compositionally biased stretch (polar residues) spans 111–128 (LGYSQDSGEAPASDSSNG).

The protein belongs to the Psb28 family. As to quaternary structure, part of the photosystem II complex.

It is found in the cellular thylakoid membrane. The polypeptide is Photosystem II reaction center Psb28 protein (Synechococcus sp. (strain CC9311)).